Here is a 1232-residue protein sequence, read N- to C-terminus: MRSKGRARKLATSNECAYGNYPEIPLEEMPDADADGITSVPSLHIQEPCSPATSSESFTPKEGSPYKAPIYIPDDIPIPDEFELRESTMPGAGLGIWTKRKIEIGEKFGPYMGEQRSDLKDSSYGWEILDEFCNVKFCIDASQPDVGSWLKYIRFAGCYDQHNLVACQINDQIFYRVVADIAPGEELLLFMKSEEDPHEPMAPDIHEERQHRCEDCDQLFESKAELADHQKFPCSTPHSAFSMVEEDLQQNLESESDLREIHGNQDCKECDRVFPDLQSLEKHMLSHTEEREYKCDQCPKAFNWKSNLIRHQMSHDSGKHYECENCAKVFTDPSNLQRHIRSQHVGARAHACPECGKTFATSSGLKQHKHIHSSVKPFICEVCHKSYTQFSNLCRHKRMHADCRTQIKCKDCGQMFSTTSSLNKHRRFCEGKNHFAAGGFFGQGISLPGTPAMDKTSMVNMSHANPGLADYFGTNRHPAGLTFPTAPGFSFSFPGLFPSGLYHRPPLIPASPPVKGLSSTEQSNKCQSPLLTHPQILPATQDILKALSKHPPVGDNKPVELLPERSSEERPLEKISDQSESSDLDDVSTPSGSDLETTSGSDLESDLESDKEKCKENGKMFKDKVSPLQNLASITNKKEHNNHSVFSASVEEQSAVSGAVNDSIKAIASIAEKYFGSTGLVGLQDKKVGALPYPSMFPLPFFPAFSQSMYPFPDRDLRSLPLKMEPQSPSEVKKLQKGSSESPFDLTTKRKDEKPLTSGPSKPSGTPATSQDQPLDLSMGSRGRASGTKLTEPRKNHVFGEKKGSNMDTRPSSDGSLQHARPTPFFMDPIYRVEKRKLTDPLEALKEKYLRPSPGFLFHPQMSAIENMAEKLESFSALKPEASELLQSVPSMFSFRAPPNTLPENLLRKGKERYTCRYCGKIFPRSANLTRHLRTHTGEQPYRCKYCDRSFSISSNLQRHVRNIHNKEKPFKCHLCDRCFGQQTNLDRHLKKHENGNMSGTATSSPHSELESAGAILDDKEDAYFTEIRNFIGNSNHGSQSPRNMEERMNGSHFKDKKALATSQNSDLLDDEEVEDEVLLDEEDEDNDIPGKPRKELGVTRLDEEIPEDDYEEAGALEMSCKASPVRYKEEDYKSGLSALDHIRHFTDSLKMREMEENQYTDAELSSISSSHVPEELKQTLHRKSKSQAYAMMLSLSDKDSLHPTSHSSSNVWHSMARAAAESSAIQSISHV.

The disordered stretch occupies residues 22–68 (PEIPLEEMPDADADGITSVPSLHIQEPCSPATSSESFTPKEGSPYKA). A compositionally biased stretch (acidic residues) spans 25–34 (PLEEMPDADA). The 113-residue stretch at 80 to 192 (DEFELRESTM…PGEELLLFMK (113 aa)) folds into the SET domain. Residues Lys-101 and Lys-192 each participate in a glycyl lysine isopeptide (Lys-Gly) (interchain with G-Cter in SUMO2) cross-link. Residues 191–442 (MKSEEDPHEP…NHFAAGGFFG (252 aa)) form an interaction with SUV39H1 and probably MAPK9 and SMAD3 region. 5 consecutive C2H2-type zinc fingers follow at residues 211 to 238 (HRCE…STPH), 265 to 287 (QDCK…MLSH), 293 to 315 (YKCD…QMSH), 321 to 344 (YECE…RSQH), and 350 to 372 (HACP…KHIH). Lys-294 is covalently cross-linked (Glycyl lysine isopeptide (Lys-Gly) (interchain with G-Cter in SUMO2)). Glycyl lysine isopeptide (Lys-Gly) (interchain with G-Cter in SUMO2) cross-links involve residues Lys-369 and Lys-376. A C2H2-type 6 zinc finger spans residues 378–400 (FICEVCHKSYTQFSNLCRHKRMH). Residues 407–429 (IKCKDCGQMFSTTSSLNKHRRFC) form a C2H2-type 7; atypical zinc finger. Residues Lys-432, Lys-525, Lys-545, Lys-549, and Lys-557 each participate in a glycyl lysine isopeptide (Lys-Gly) (interchain with G-Cter in SUMO2) cross-link. Positions 548-622 (SKHPPVGDNK…KCKENGKMFK (75 aa)) are disordered. The span at 562-577 (LPERSSEERPLEKISD) shows a compositional bias: basic and acidic residues. The span at 588–600 (STPSGSDLETTSG) shows a compositional bias: polar residues. The span at 608-622 (ESDKEKCKENGKMFK) shows a compositional bias: basic and acidic residues. Residues 611-624 (KEKCKENGKMFKDK) carry the Nuclear localization signal motif. Lys-624 participates in a covalent cross-link: Glycyl lysine isopeptide (Lys-Gly) (interchain with G-Cter in SUMO2). Residue Ser-626 is modified to Phosphoserine. Glycyl lysine isopeptide (Lys-Gly) (interchain with G-Cter in SUMO2) cross-links involve residues Lys-637, Lys-665, Lys-687, and Lys-723. A disordered region spans residues 720-823 (LPLKMEPQSP…DGSLQHARPT (104 aa)). Phosphoserine is present on Ser-728. Glycyl lysine isopeptide (Lys-Gly) (interchain with G-Cter in SUMO2) cross-links involve residues Lys-733, Lys-734, and Lys-737. Ser-742 carries the phosphoserine modification. Residues 743 to 747 (PFDLT) carry the CTBP-binding motif 1 motif. Residues Lys-751, Lys-754, and Lys-762 each participate in a glycyl lysine isopeptide (Lys-Gly) (interchain with G-Cter in SUMO2) cross-link. The segment covering 758-773 (SGPSKPSGTPATSQDQ) has biased composition (polar residues). The CTBP-binding motif 2 motif lies at 774 to 778 (PLDLS). Residues Lys-789, Lys-802, and Lys-803 each participate in a glycyl lysine isopeptide (Lys-Gly) (interchain with G-Cter in SUMO2) cross-link. The segment covering 791-805 (TEPRKNHVFGEKKGS) has biased composition (basic and acidic residues). Residues 806 to 816 (NMDTRPSSDGS) show a composition bias toward polar residues. Residues Lys-837, Lys-846, Lys-848, and Lys-879 each participate in a glycyl lysine isopeptide (Lys-Gly) (interchain with G-Cter in SUMO2) cross-link. C2H2-type zinc fingers lie at residues 914–936 (YTCR…LRTH), 942–965 (YRCK…RNIH), and 971–993 (FKCH…LKKH). Residue Lys-1020 forms a Glycyl lysine isopeptide (Lys-Gly) (interchain with G-Cter in SUMO2) linkage. Positions 1032–1043 (IGNSNHGSQSPR) are enriched in polar residues. The tract at residues 1032–1107 (IGNSNHGSQS…GVTRLDEEIP (76 aa)) is disordered. 2 positions are modified to phosphoserine: Ser-1039 and Ser-1041. A compositionally biased stretch (basic and acidic residues) spans 1044-1059 (NMEERMNGSHFKDKKA). Glycyl lysine isopeptide (Lys-Gly) (interchain with G-Cter in SUMO2) cross-links involve residues Lys-1055 and Lys-1058. Acidic residues predominate over residues 1068–1088 (LLDDEEVEDEVLLDEEDEDND). A compositionally biased stretch (basic and acidic residues) spans 1089–1104 (IPGKPRKELGVTRLDE). Residues Lys-1122, Lys-1129, Lys-1134, Lys-1151, Lys-1178, and Lys-1186 each participate in a glycyl lysine isopeptide (Lys-Gly) (interchain with G-Cter in SUMO2) cross-link.

As to quaternary structure, homooligomer. Interacts with CTBP1. Interacts with SMAD3 (via MH2 domain); the interaction is direct. Interacts with SMAD4; through interaction with SMAD3. Interacts with CREBBP, KAT2B and histone deacetylases. Interacts with MAPK8 and MAPK9; inhibits JNK signaling. Interacts with SUV39H1 (via SET domain); enhances MECOM transcriptional repression activity. Post-translationally, may be acetylated by CREBBP and KAT2B.

The protein resides in the nucleus. It localises to the nucleus speckle. The protein localises to the cytoplasm. It catalyses the reaction L-lysyl(9)-[histone H3] + S-adenosyl-L-methionine = N(6)-methyl-L-lysyl(9)-[histone H3] + S-adenosyl-L-homocysteine + H(+). Functionally, functions as a transcriptional regulator binding to DNA sequences in the promoter region of target genes and regulating positively or negatively their expression. Oncogene which plays a role in development, cell proliferation and differentiation. May also play a role in apoptosis through regulation of the JNK and TGF-beta signaling. Involved in hematopoiesis. Its function is as follows. Displays histone methyltransferase activity and monomethylates 'Lys-9' of histone H3 (H3K9me1) in vitro. Probably catalyzes the monomethylation of free histone H3 in the cytoplasm which is then transported to the nucleus and incorporated into nucleosomes where SUV39H methyltransferases use it as a substrate to catalyze histone H3 'Lys-9' trimethylation. Likely to be one of the primary histone methyltransferases along with PRDM16 that direct cytoplasmic H3K9me1 methylation. This chain is Histone-lysine N-methyltransferase MECOM, found in Mus musculus (Mouse).